The following is a 198-amino-acid chain: Imidazoleglycerol-phosphate dehydratase (198 aa).

This sequence belongs to the imidazoleglycerol-phosphate dehydratase family.

Its subcellular location is the cytoplasm. The catalysed reaction is D-erythro-1-(imidazol-4-yl)glycerol 3-phosphate = 3-(imidazol-4-yl)-2-oxopropyl phosphate + H2O. Its pathway is amino-acid biosynthesis; L-histidine biosynthesis; L-histidine from 5-phospho-alpha-D-ribose 1-diphosphate: step 6/9. This chain is Imidazoleglycerol-phosphate dehydratase, found in Gluconacetobacter diazotrophicus (strain ATCC 49037 / DSM 5601 / CCUG 37298 / CIP 103539 / LMG 7603 / PAl5).